The sequence spans 507 residues: MAVAAAAMIGLPQAYLEGKEVKETSSLVTELCRHFYTQGWVSGTGGSITMKVHDASIPKPEQLIVMSPSGVQKERMQPEDMYILSANGSIISTPSPKPYPNKPPKCTDCAPLFMKAYEMRNAGAVIHSHGMESCLVTMLNPQAKEFRITHMEMIKGIQGHGYYDELVVPIIENTAYENELTDSLTKAIEAYPKATAVLVRNHGVYIWGDSWIHAKTQAECYHYLFDAAIKLHQLGLDAATPDHGPIRRTIHSQIKDSQYEREWPRRWIVLDIEGTTTPITFVTDVLFPYARENVGKHLNLTYHTAETQEDIKLLRAQVEEDLREGVTGAVPIPHADEGKEKVIAAMVSNVEAMIRADRKITALKELQGHIWRTGFECDELKAIVFEDVADALEKWHSSGIKVYIYSSGSRLAQKLLFGNTDYGDLRKYISGFFDTTIGNKKESRSYKEIKETLGVDDPAEIMFVTDVYQEAVAAKAAGLEAIISIRPGNAPLPENHGFKTVTSFSQI.

The residue at position 2 (Ala2) is an N-acetylalanine. The methylthioribulose-1-phosphate dehydratase stretch occupies residues 2 to 237 (AVAAAAMIGL…AIKLHQLGLD (236 aa)). Cys109 contacts substrate. Zn(2+) contacts are provided by His127 and His129. The Proton donor/acceptor role is filled by Glu152. His202 serves as a coordination point for Zn(2+). The enolase-phosphatase E1 stretch occupies residues 268 to 507 (IVLDIEGTTT…FKTVTSFSQI (240 aa)). Asp271 and Glu273 together coordinate Mg(2+). Residues 406–407 (SS) and Lys440 contribute to the substrate site. Asp466 contacts Mg(2+).

It in the N-terminal section; belongs to the aldolase class II family. MtnB subfamily. In the C-terminal section; belongs to the HAD-like hydrolase superfamily. MasA/MtnC family. The cofactor is Zn(2+). Mg(2+) serves as cofactor.

It catalyses the reaction 5-(methylsulfanyl)-D-ribulose 1-phosphate = 5-methylsulfanyl-2,3-dioxopentyl phosphate + H2O. The enzyme catalyses 5-methylsulfanyl-2,3-dioxopentyl phosphate + H2O = 1,2-dihydroxy-5-(methylsulfanyl)pent-1-en-3-one + phosphate. Its pathway is amino-acid biosynthesis; L-methionine biosynthesis via salvage pathway; L-methionine from S-methyl-5-thio-alpha-D-ribose 1-phosphate: step 2/6. It participates in amino-acid biosynthesis; L-methionine biosynthesis via salvage pathway; L-methionine from S-methyl-5-thio-alpha-D-ribose 1-phosphate: step 3/6. The protein operates within amino-acid biosynthesis; L-methionine biosynthesis via salvage pathway; L-methionine from S-methyl-5-thio-alpha-D-ribose 1-phosphate: step 4/6. The sequence is that of Probable bifunctional methylthioribulose-1-phosphate dehydratase/enolase-phosphatase E1 from Arabidopsis thaliana (Mouse-ear cress).